We begin with the raw amino-acid sequence, 365 residues long: Peptide chain release factor 2 (365 aa).

Gln-252 is subject to N5-methylglutamine.

The protein belongs to the prokaryotic/mitochondrial release factor family. In terms of processing, methylated by PrmC. Methylation increases the termination efficiency of RF2.

The protein localises to the cytoplasm. In terms of biological role, peptide chain release factor 2 directs the termination of translation in response to the peptide chain termination codons UGA and UAA. In Aeromonas hydrophila subsp. hydrophila (strain ATCC 7966 / DSM 30187 / BCRC 13018 / CCUG 14551 / JCM 1027 / KCTC 2358 / NCIMB 9240 / NCTC 8049), this protein is Peptide chain release factor 2.